The primary structure comprises 638 residues: MSQQETHGFQTEVKQLLNLMIHSLYSNKEIFLRELVSNAADASDKLRYEALTNDALYEGDGELRVRISTNKEKGTVTIEDNGIGMTRDTVIEHLGTIAKSGTADFFKNLSGDESKDSQLIGQFGVGFYSSFIVADKVTVRTRAAGHGSDEGVQWESAGEGDFTVDTIVKETRGTEIVLHLREEEKEFADDYRLRSIITKYSDHISVPVEMWEEGTPAIEATEEQEAVAATDGQWQSMNKATALWTRNKSDVSKEEYEEFYKHISHDFTDPLLWSHNRVEGKQEYTSLLYIPSKAPWDMWNRDRKHGLKLFVQRVFVMDDAEQFMPSYLRFVQGLIDSNDLPLNVSREILQDNKVTTALRTAVTKRVLGMLEKLAKNDAEKYQTFWAEFGQVLKEGPAEDMVNKERIAGLLRFASTHTEDAAPTVSLADYVSRMQEGQSKIYYIVADSHEAAANSPHLELLRKKGIEVVLMSERIDEWLINHLTDFDGKQLHSVTRGDLELGDLEDAGEKEAQEKLETESEGLVKRIKDSLGEKVSAVKVTTRLTDTPACVVAGEGEMSTQMIKLMEAAGQAVPESKPTFEINPEHPLVARLNDEQDEALFAQWSDLLLQQAQLSEKGSLADPSAFIKLMNEMLLAKLK.

Residues 1 to 346 (MSQQETHGFQ…SNDLPLNVSR (346 aa)) form an a; substrate-binding region. Residues 347-563 (EILQDNKVTT…EGEMSTQMIK (217 aa)) form a b region. Positions 564 to 638 (LMEAAGQAVP…MNEMLLAKLK (75 aa)) are c.

This sequence belongs to the heat shock protein 90 family. Homodimer.

The protein localises to the cytoplasm. In terms of biological role, molecular chaperone. Has ATPase activity. This Shewanella sediminis (strain HAW-EB3) protein is Chaperone protein HtpG.